The primary structure comprises 26 residues: Dermaseptin-B5 (26 aa).

A Valine amide modification is found at valine 26.

This sequence belongs to the frog skin active peptide (FSAP) family. Dermaseptin subfamily. In terms of tissue distribution, expressed by the skin glands.

The protein localises to the secreted. Its function is as follows. Possesses a potent antimicrobial activity against Gram-positive and Gram-negative bacteria. Probably acts by disturbing membrane functions with its amphipathic structure. This Phyllomedusa bicolor (Two-colored leaf frog) protein is Dermaseptin-B5.